Here is a 188-residue protein sequence, read N- to C-terminus: Peptide deformylase (188 aa).

Residues 70-90 (AEPVACDHDGHHHHHQPTKKE) are disordered. 2 residues coordinate Fe cation: Cys113 and His155. Glu156 is an active-site residue. His159 serves as a coordination point for Fe cation.

This sequence belongs to the polypeptide deformylase family. Fe(2+) serves as cofactor.

It carries out the reaction N-terminal N-formyl-L-methionyl-[peptide] + H2O = N-terminal L-methionyl-[peptide] + formate. Its function is as follows. Removes the formyl group from the N-terminal Met of newly synthesized proteins. Requires at least a dipeptide for an efficient rate of reaction. N-terminal L-methionine is a prerequisite for activity but the enzyme has broad specificity at other positions. This is Peptide deformylase from Novosphingobium aromaticivorans (strain ATCC 700278 / DSM 12444 / CCUG 56034 / CIP 105152 / NBRC 16084 / F199).